Consider the following 528-residue polypeptide: Protein arginine N-methyltransferase 3 (528 aa).

Positions 1–43 are disordered; that stretch reads MCSLAAGNGRGAELGPEPLELSDSGDDAGWEDEDADTEPAHGR. Cys2 carries the N-acetylcysteine modification. 2 positions are modified to phosphoserine: Ser22 and Ser24. Residues 23 to 37 show a composition bias toward acidic residues; that stretch reads DSGDDAGWEDEDADT. The segment at 46 to 69 adopts a C2H2-type zinc-finger fold; that stretch reads TPCLFCDRLFASAEETFSHCKLEH. Ser169 carries the post-translational modification Phosphoserine. The segment at 184 to 528 is mediates interaction with ALDH1A1; it reads MKQFAQDFVM…NSSTQTYSLQ (345 aa). The region spanning 214–528 is the SAM-dependent MTase PRMT-type domain; the sequence is DGVYFSSYGH…NSSTQTYSLQ (315 aa). S-adenosyl-L-homocysteine-binding residues include Arg236, Gly260, Asp282, Ser284, Ile310, and Glu311. Active-site residues include Glu326 and Glu335.

It belongs to the class I-like SAM-binding methyltransferase superfamily. Protein arginine N-methyltransferase family. As to quaternary structure, monomer and homodimer. Interacts with EPB41L3 (via FERM domain); the interaction is direct and inhibits the protein-arginine N-methyltransferase activity of PRMT3. Interacts with the 40S ribosomal protein RPS2. Interacts with ALDH1A1; the interaction is direct, inhibits ALDH1A1 aldehyde dehydrogenase activity and is independent of the methyltransferase activity of PRMT3.

Its subcellular location is the cytoplasm. It localises to the cytosol. The protein resides in the nucleus. The enzyme catalyses L-arginyl-[protein] + S-adenosyl-L-methionine = N(omega)-methyl-L-arginyl-[protein] + S-adenosyl-L-homocysteine + H(+). The catalysed reaction is L-arginyl-[protein] + 2 S-adenosyl-L-methionine = N(omega),N(omega)-dimethyl-L-arginyl-[protein] + 2 S-adenosyl-L-homocysteine + 2 H(+). With respect to regulation, inhibited by N-ethylmaleimide and high concentrations of zinc chloride. Protein-arginine N-methyltransferase that catalyzes both the monomethylation and asymmetric dimethylation of the guanidino nitrogens of arginine residues in target proteins, and therefore falls into the group of type I methyltransferases. Catalyzes the asymmetric arginine dimethylation at multiple sites in the Arg/Gly-rich region of small ribosomal subunit protein uS5/RPS2. Also appears to methylate other ribosomal proteins. May regulate retinoic acid synthesis and signaling by inhibiting ALDH1A1 retinal dehydrogenase activity. Contributes to methylation of histone H4 'Arg-3', a specific tag for epigenetic transcriptional activation. Promotes osteogenesis. This is Protein arginine N-methyltransferase 3 from Mus musculus (Mouse).